Consider the following 1226-residue polypeptide: DNA-directed RNA polymerase subunit beta (1226 aa).

The protein belongs to the RNA polymerase beta chain family. As to quaternary structure, the RNAP catalytic core consists of 2 alpha, 1 beta, 1 beta' and 1 omega subunit. When a sigma factor is associated with the core the holoenzyme is formed, which can initiate transcription.

It catalyses the reaction RNA(n) + a ribonucleoside 5'-triphosphate = RNA(n+1) + diphosphate. DNA-dependent RNA polymerase catalyzes the transcription of DNA into RNA using the four ribonucleoside triphosphates as substrates. The protein is DNA-directed RNA polymerase subunit beta of Leptospira borgpetersenii serovar Hardjo-bovis (strain JB197).